The chain runs to 134 residues: Small ribosomal subunit protein bS6 (134 aa).

The interval 103 to 134 (AAPVKSAEEGTEEVAAEAATEAPAETTTTVEG) is disordered. Over residues 118–134 (AEAATEAPAETTTTVEG) the composition is skewed to low complexity.

The protein belongs to the bacterial ribosomal protein bS6 family.

Binds together with bS18 to 16S ribosomal RNA. The sequence is that of Small ribosomal subunit protein bS6 from Citrifermentans bemidjiense (strain ATCC BAA-1014 / DSM 16622 / JCM 12645 / Bem) (Geobacter bemidjiensis).